A 209-amino-acid polypeptide reads, in one-letter code: Ribosomal RNA large subunit methyltransferase E (209 aa).

Positions 63, 65, 83, 99, and 124 each coordinate S-adenosyl-L-methionine. The active-site Proton acceptor is lysine 164.

It belongs to the class I-like SAM-binding methyltransferase superfamily. RNA methyltransferase RlmE family.

The protein localises to the cytoplasm. It carries out the reaction uridine(2552) in 23S rRNA + S-adenosyl-L-methionine = 2'-O-methyluridine(2552) in 23S rRNA + S-adenosyl-L-homocysteine + H(+). Specifically methylates the uridine in position 2552 of 23S rRNA at the 2'-O position of the ribose in the fully assembled 50S ribosomal subunit. The protein is Ribosomal RNA large subunit methyltransferase E of Shewanella denitrificans (strain OS217 / ATCC BAA-1090 / DSM 15013).